We begin with the raw amino-acid sequence, 394 residues long: Elongation factor Tu 2 (394 aa).

The tr-type G domain maps to 10–204 (KPHVNVGTIG…ALDSYIPEPE (195 aa)). A G1 region spans residues 19–26 (GHVDHGKT). 19 to 26 (GHVDHGKT) contributes to the GTP binding site. Residue Thr-26 coordinates Mg(2+). The G2 stretch occupies residues 60–64 (GITIN). Positions 81-84 (DCPG) are G3. GTP contacts are provided by residues 81 to 85 (DCPGH) and 136 to 139 (NKCD). The tract at residues 136–139 (NKCD) is G4. Residues 174 to 176 (SAL) are G5.

This sequence belongs to the TRAFAC class translation factor GTPase superfamily. Classic translation factor GTPase family. EF-Tu/EF-1A subfamily. As to quaternary structure, monomer.

It localises to the cytoplasm. It carries out the reaction GTP + H2O = GDP + phosphate + H(+). GTP hydrolase that promotes the GTP-dependent binding of aminoacyl-tRNA to the A-site of ribosomes during protein biosynthesis. This chain is Elongation factor Tu 2, found in Shewanella oneidensis (strain ATCC 700550 / JCM 31522 / CIP 106686 / LMG 19005 / NCIMB 14063 / MR-1).